The chain runs to 1065 residues: DNA-directed RNA polymerase subunit beta (1065 aa).

Belongs to the RNA polymerase beta chain family. In plastids the minimal PEP RNA polymerase catalytic core is composed of four subunits: alpha, beta, beta', and beta''. When a (nuclear-encoded) sigma factor is associated with the core the holoenzyme is formed, which can initiate transcription.

It is found in the plastid. It localises to the chloroplast. The enzyme catalyses RNA(n) + a ribonucleoside 5'-triphosphate = RNA(n+1) + diphosphate. DNA-dependent RNA polymerase catalyzes the transcription of DNA into RNA using the four ribonucleoside triphosphates as substrates. This chain is DNA-directed RNA polymerase subunit beta, found in Marchantia polymorpha (Common liverwort).